Reading from the N-terminus, the 514-residue chain is Glutamyl-tRNA(Gln) amidotransferase subunit A (514 aa).

Residues Lys-76 and Ser-151 each act as charge relay system in the active site. Ser-175 (acyl-ester intermediate) is an active-site residue.

It belongs to the amidase family. GatA subfamily. Heterotrimer of A, B and C subunits.

The catalysed reaction is L-glutamyl-tRNA(Gln) + L-glutamine + ATP + H2O = L-glutaminyl-tRNA(Gln) + L-glutamate + ADP + phosphate + H(+). Allows the formation of correctly charged Gln-tRNA(Gln) through the transamidation of misacylated Glu-tRNA(Gln) in organisms which lack glutaminyl-tRNA synthetase. The reaction takes place in the presence of glutamine and ATP through an activated gamma-phospho-Glu-tRNA(Gln). The sequence is that of Glutamyl-tRNA(Gln) amidotransferase subunit A from Salinibacter ruber (strain DSM 13855 / M31).